A 210-amino-acid polypeptide reads, in one-letter code: Probable HTH-type transcriptional regulator ArpR (210 aa).

An HTH tetR-type domain is found at 10–70 (QETRAQIIEA…ALLDSLHETH (61 aa)). Residues 33-52 (TLADIAELAGVTRGAIYWHF) constitute a DNA-binding region (H-T-H motif).

In terms of biological role, probable regulatory protein for the antibiotic efflux pump arpABC operon. May function as a repressor. This is Probable HTH-type transcriptional regulator ArpR (arpR) from Pseudomonas putida (Arthrobacter siderocapsulatus).